The sequence spans 126 residues: Fluoride-specific ion channel FluC (126 aa).

The next 4 membrane-spanning stretches (helical) occupy residues 6–26 (FLAV…LAIL), 36–56 (YGTL…VGFF), 69–89 (LVIT…GEVV), and 99–119 (IGVL…MLGF). Na(+) is bound by residues glycine 76 and threonine 79.

It belongs to the fluoride channel Fluc/FEX (TC 1.A.43) family.

It is found in the cell inner membrane. The catalysed reaction is fluoride(in) = fluoride(out). Its activity is regulated as follows. Na(+) is not transported, but it plays an essential structural role and its presence is essential for fluoride channel function. Functionally, fluoride-specific ion channel. Important for reducing fluoride concentration in the cell, thus reducing its toxicity. This is Fluoride-specific ion channel FluC from Ralstonia pickettii (strain 12J).